A 65-amino-acid chain; its full sequence is Large ribosomal subunit protein uL30 (65 aa).

The protein belongs to the universal ribosomal protein uL30 family. Part of the 50S ribosomal subunit.

The sequence is that of Large ribosomal subunit protein uL30 from Rickettsia bellii (strain OSU 85-389).